The following is a 264-amino-acid chain: Phosphatidylglycerol--prolipoprotein diacylglyceryl transferase (264 aa).

4 helical membrane passes run 17–37 (LAIH…YLLG), 57–77 (LIFY…VLFY), 89–109 (IAFL…VILV), and 118–138 (GVSF…GLGA). Residue arginine 140 coordinates a 1,2-diacyl-sn-glycero-3-phospho-(1'-sn-glycerol). 3 helical membrane-spanning segments follow: residues 173-193 (PSQL…LWWF), 201-221 (GQVS…VEFT), and 237-257 (MGQW…VLTA).

Belongs to the Lgt family.

It localises to the cell inner membrane. It carries out the reaction L-cysteinyl-[prolipoprotein] + a 1,2-diacyl-sn-glycero-3-phospho-(1'-sn-glycerol) = an S-1,2-diacyl-sn-glyceryl-L-cysteinyl-[prolipoprotein] + sn-glycerol 1-phosphate + H(+). It functions in the pathway protein modification; lipoprotein biosynthesis (diacylglyceryl transfer). Functionally, catalyzes the transfer of the diacylglyceryl group from phosphatidylglycerol to the sulfhydryl group of the N-terminal cysteine of a prolipoprotein, the first step in the formation of mature lipoproteins. The protein is Phosphatidylglycerol--prolipoprotein diacylglyceryl transferase of Bordetella avium (strain 197N).